A 681-amino-acid chain; its full sequence is Elongation factor G (681 aa).

Residues 5-279 (KNIRNIGIIA…SIVNFLPSPI (275 aa)) enclose the tr-type G domain. Residues 14–21 (AHVDAGKT), 82–86 (DTPGH), and 136–139 (NKLD) each bind GTP.

Belongs to the TRAFAC class translation factor GTPase superfamily. Classic translation factor GTPase family. EF-G/EF-2 subfamily.

It is found in the cytoplasm. Catalyzes the GTP-dependent ribosomal translocation step during translation elongation. During this step, the ribosome changes from the pre-translocational (PRE) to the post-translocational (POST) state as the newly formed A-site-bound peptidyl-tRNA and P-site-bound deacylated tRNA move to the P and E sites, respectively. Catalyzes the coordinated movement of the two tRNA molecules, the mRNA and conformational changes in the ribosome. This is Elongation factor G from Carsonella ruddii (strain PV).